Consider the following 236-residue polypeptide: Lipid A 4'-phosphatase (236 aa).

5 helical membrane passes run 26–46 (FFYL…FLFF), 58–78 (FIVG…SSFF), 134–153 (YTWT…IYIG), 160–182 (IIPG…LYAR), and 200–220 (GDSI…MLCM).

This sequence belongs to the lipid A LpxF 4'-phosphatase family.

The protein resides in the cell inner membrane. The protein operates within bacterial outer membrane biogenesis; LPS lipid A biosynthesis. Removes the 4'-phosphate group from lipid A species. Absence of phosphate groups in lipid A renders the bacteria resistant to host-derived cationic antimicrobial peptides (CAMP) and allows it to camouflage itself from the host innate immune response. Removal of the 4'-phosphate may be required to generate the substrate for deacylation of the pentaacyl lipid A to the tetraccylated lipid A species. The chain is Lipid A 4'-phosphatase from Porphyromonas gingivalis (strain ATCC 33277 / DSM 20709 / CIP 103683 / JCM 12257 / NCTC 11834 / 2561).